Here is a 56-residue protein sequence, read N- to C-terminus: Large ribosomal subunit protein bL32B (56 aa).

Residues 1–19 (MAVPKRRMSRSNTRHRRAQ) are compositionally biased toward basic residues. The disordered stretch occupies residues 1–22 (MAVPKRRMSRSNTRHRRAQWKA).

Belongs to the bacterial ribosomal protein bL32 family.

The protein is Large ribosomal subunit protein bL32B (rpmF2) of Streptomyces coelicolor (strain ATCC BAA-471 / A3(2) / M145).